A 169-amino-acid chain; its full sequence is 6,7-dimethyl-8-ribityllumazine synthase (169 aa).

Residues phenylalanine 24, 58–60 (ALE), and 82–84 (AVV) each bind 5-amino-6-(D-ribitylamino)uracil. Residue 87 to 88 (ET) coordinates (2S)-2-hydroxy-3-oxobutyl phosphate. Catalysis depends on histidine 90, which acts as the Proton donor. Asparagine 115 contributes to the 5-amino-6-(D-ribitylamino)uracil binding site. Arginine 129 serves as a coordination point for (2S)-2-hydroxy-3-oxobutyl phosphate.

Belongs to the DMRL synthase family.

The catalysed reaction is (2S)-2-hydroxy-3-oxobutyl phosphate + 5-amino-6-(D-ribitylamino)uracil = 6,7-dimethyl-8-(1-D-ribityl)lumazine + phosphate + 2 H2O + H(+). It participates in cofactor biosynthesis; riboflavin biosynthesis; riboflavin from 2-hydroxy-3-oxobutyl phosphate and 5-amino-6-(D-ribitylamino)uracil: step 1/2. Its function is as follows. Catalyzes the formation of 6,7-dimethyl-8-ribityllumazine by condensation of 5-amino-6-(D-ribitylamino)uracil with 3,4-dihydroxy-2-butanone 4-phosphate. This is the penultimate step in the biosynthesis of riboflavin. The polypeptide is 6,7-dimethyl-8-ribityllumazine synthase (Cupriavidus metallidurans (strain ATCC 43123 / DSM 2839 / NBRC 102507 / CH34) (Ralstonia metallidurans)).